Consider the following 255-residue polypeptide: 5-oxoprolinase subunit A (255 aa).

This sequence belongs to the LamB/PxpA family. As to quaternary structure, forms a complex composed of PxpA, PxpB and PxpC.

The enzyme catalyses 5-oxo-L-proline + ATP + 2 H2O = L-glutamate + ADP + phosphate + H(+). Functionally, catalyzes the cleavage of 5-oxoproline to form L-glutamate coupled to the hydrolysis of ATP to ADP and inorganic phosphate. The chain is 5-oxoprolinase subunit A from Thermococcus onnurineus (strain NA1).